We begin with the raw amino-acid sequence, 396 residues long: NADH-quinone oxidoreductase subunit D 1 (396 aa).

It belongs to the complex I 49 kDa subunit family. As to quaternary structure, NDH-1 is composed of 14 different subunits. Subunits NuoB, C, D, E, F, and G constitute the peripheral sector of the complex.

It localises to the cell inner membrane. It carries out the reaction a quinone + NADH + 5 H(+)(in) = a quinol + NAD(+) + 4 H(+)(out). Functionally, NDH-1 shuttles electrons from NADH, via FMN and iron-sulfur (Fe-S) centers, to quinones in the respiratory chain. The immediate electron acceptor for the enzyme in this species is believed to be ubiquinone. Couples the redox reaction to proton translocation (for every two electrons transferred, four hydrogen ions are translocated across the cytoplasmic membrane), and thus conserves the redox energy in a proton gradient. The sequence is that of NADH-quinone oxidoreductase subunit D 1 from Rhizobium meliloti (strain 1021) (Ensifer meliloti).